Reading from the N-terminus, the 361-residue chain is Methionine import ATP-binding protein MetN (361 aa).

Residues 22-257 form the ABC transporter domain; it reads VRLIDVKRRF…PQTDITRSLL (236 aa). An ATP-binding site is contributed by 54–61; the sequence is GRSGAGKS.

This sequence belongs to the ABC transporter superfamily. Methionine importer (TC 3.A.1.24) family. In terms of assembly, the complex is composed of two ATP-binding proteins (MetN), two transmembrane proteins (MetI) and a solute-binding protein (MetQ).

It localises to the cell inner membrane. It catalyses the reaction L-methionine(out) + ATP + H2O = L-methionine(in) + ADP + phosphate + H(+). The enzyme catalyses D-methionine(out) + ATP + H2O = D-methionine(in) + ADP + phosphate + H(+). Part of the ABC transporter complex MetNIQ involved in methionine import. Responsible for energy coupling to the transport system. In Rhizobium etli (strain ATCC 51251 / DSM 11541 / JCM 21823 / NBRC 15573 / CFN 42), this protein is Methionine import ATP-binding protein MetN.